A 470-amino-acid polypeptide reads, in one-letter code: E3 SUMO-protein ligase EGR2 (470 aa).

The segment covering 126–141 (PPASTTASSSVTSASP) has biased composition (low complexity). Disordered regions lie at residues 126–153 (PPAS…GVCT), 159–178 (PELD…SGCT), and 184–211 (DPSA…YPSP). K247 is modified (N6-acetyllysine; by EP300). Residues 275-344 (GPSAGVTGPG…RPYPCPAEGC (70 aa)) are disordered. The span at 281 to 291 (TGPGASGGGEG) shows a compositional bias: gly residues. C2H2-type zinc fingers lie at residues 337–361 (YPCP…IRIH), 367–389 (FQCR…IRTH), and 395–417 (FACD…TKIH). The tract at residues 408–470 (DERKRHTKIH…ASCTSRTRTP (63 aa)) is disordered. Residues 412-422 (RHTKIHLRQKE) are compositionally biased toward basic residues. Residues 426–439 (SAPSSSASAQSSAS) are compositionally biased toward low complexity. Gly residues predominate over residues 440–450 (GPGGSQAGGSL).

The protein belongs to the EGR C2H2-type zinc-finger protein family. In terms of assembly, interacts with HCFC1. Interacts with WWP2. Interacts with UBC9. Interacts with CITED1. Interacts (via phosphorylated form) with SFN. Ubiquitinated by WWP2 leading to proteasomal degradation. In terms of processing, acetylated at Lys-247. May be deacetylated by HDAC6, HDAC10 or SIRT1.

It localises to the nucleus. Its pathway is protein modification; protein sumoylation. Functionally, sequence-specific DNA-binding transcription factor. Plays a role in hindbrain segmentation by regulating the expression of a subset of homeobox containing genes and in Schwann cell myelination by regulating the expression of genes involved in the formation and maintenance of myelin. Binds to two EGR2-consensus sites EGR2A (5'-CTGTAGGAG-3') and EGR2B (5'-ATGTAGGTG-3') in the HOXB3 enhancer and promotes HOXB3 transcriptional activation. Binds to specific DNA sites located in the promoter region of HOXA4, HOXB2 and ERBB2. Regulates hindbrain segmentation by controlling the expression of Hox genes, such as HOXA4, HOXB3 and HOXB2, and thereby specifying odd and even rhombomeres. Promotes the expression of HOXB3 in the rhombomere r5 in the hindbrain. Regulates myelination in the peripheral nervous system after birth, possibly by regulating the expression of myelin proteins, such as MPZ, and by promoting the differentiation of Schwann cells. Involved in the development of the jaw openener musculature, probably by playing a role in its innervation through trigeminal motor neurons. May play a role in adipogenesis, possibly by regulating the expression of CEBPB. In terms of biological role, E3 SUMO-protein ligase helping SUMO1 conjugation to its coregulators NAB1 and NAB2, whose sumoylation down-regulates EGR2 transcriptional activity. This is E3 SUMO-protein ligase EGR2 (Egr2) from Rattus norvegicus (Rat).